Consider the following 100-residue polypeptide: Urease subunit gamma (100 aa).

This sequence belongs to the urease gamma subunit family. As to quaternary structure, heterotrimer of UreA (gamma), UreB (beta) and UreC (alpha) subunits. Three heterotrimers associate to form the active enzyme.

The protein resides in the cytoplasm. It carries out the reaction urea + 2 H2O + H(+) = hydrogencarbonate + 2 NH4(+). It functions in the pathway nitrogen metabolism; urea degradation; CO(2) and NH(3) from urea (urease route): step 1/1. The polypeptide is Urease subunit gamma (Granulibacter bethesdensis (strain ATCC BAA-1260 / CGDNIH1)).